Reading from the N-terminus, the 352-residue chain is Protein Wnt-4a (352 aa).

The first 22 residues, 1–22 (MSSEYLIRSLLMLFLALFSANA), serve as a signal peptide directing secretion. Cystine bridges form between Cys-78–Cys-89, Cys-128–Cys-136, Cys-138–Cys-155, Cys-206–Cys-220, Cys-208–Cys-215, Cys-280–Cys-312, Cys-297–Cys-307, Cys-311–Cys-351, Cys-327–Cys-342, Cys-329–Cys-339, and Cys-334–Cys-335. An N-linked (GlcNAc...) asparagine glycan is attached at Asn-88. Ser-212 is lipidated: O-palmitoleoyl serine; by PORCN. A glycan (N-linked (GlcNAc...) asparagine) is linked at Asn-298.

This sequence belongs to the Wnt family. In terms of processing, palmitoleoylation is required for efficient binding to frizzled receptors. Depalmitoleoylation leads to Wnt signaling pathway inhibition. In terms of tissue distribution, caudal forebrain and neural keel, the floor plate, the gill slit and the developing pronephros.

The protein localises to the secreted. Its subcellular location is the extracellular space. It is found in the extracellular matrix. Functionally, ligand for members of the frizzled family of seven transmembrane receptors. Plays an important role in embryonic development. The sequence is that of Protein Wnt-4a (wnt4a) from Danio rerio (Zebrafish).